Reading from the N-terminus, the 313-residue chain is GDP-D-glycero-alpha-D-manno-heptose dehydrogenase (313 aa).

Residues 13–14 (YI), 33–39 (DNLMFDQ), phenylalanine 37, 57–58 (DA), leucine 77, and 144–148 (YGIDK) each bind NADH. Threonine 168 provides a ligand contact to GDP. Residues valine 169 and 175–177 (RMR) each bind NADH. GDP is bound by residues 179–184 (DLLVND), 196–198 (VLF), arginine 204, lysine 242, and arginine 270. Asparagine 311 contacts NADH.

Homotetramer. Requires NAD(+) as cofactor.

The catalysed reaction is GDP-D-glycero-alpha-D-manno-heptose + 2-oxoglutarate = GDP-D-glycero-4-keto-alpha-D-lyxo-heptose + (S)-2-hydroxyglutarate. Its pathway is capsule biogenesis; capsule polysaccharide biosynthesis. Its function is as follows. NAD-dependent dehydrogenase involved in the biosynthesis of heptose moieties with a hydroxyl group at C6 found on the capsular polysaccharide (CPS) of C.jejuni. Catalyzes the initial oxidation of C4 of the GDP-D-glycero-alpha-D-manno-heptose to form GDP-D-glycero-4-keto-alpha-D-lyxo-heptose in the presence of alpha-ketoglutarate required to recycle the NADH nucleotide. The polypeptide is GDP-D-glycero-alpha-D-manno-heptose dehydrogenase (Campylobacter jejuni subsp. jejuni serotype O:2 (strain ATCC 700819 / NCTC 11168)).